Reading from the N-terminus, the 957-residue chain is Glycine dehydrogenase (decarboxylating) (957 aa).

K708 is subject to N6-(pyridoxal phosphate)lysine.

Belongs to the GcvP family. As to quaternary structure, the glycine cleavage system is composed of four proteins: P, T, L and H. Pyridoxal 5'-phosphate is required as a cofactor.

It catalyses the reaction N(6)-[(R)-lipoyl]-L-lysyl-[glycine-cleavage complex H protein] + glycine + H(+) = N(6)-[(R)-S(8)-aminomethyldihydrolipoyl]-L-lysyl-[glycine-cleavage complex H protein] + CO2. The glycine cleavage system catalyzes the degradation of glycine. The P protein binds the alpha-amino group of glycine through its pyridoxal phosphate cofactor; CO(2) is released and the remaining methylamine moiety is then transferred to the lipoamide cofactor of the H protein. The polypeptide is Glycine dehydrogenase (decarboxylating) (Klebsiella pneumoniae subsp. pneumoniae (strain ATCC 700721 / MGH 78578)).